A 773-amino-acid chain; its full sequence is E3 ubiquitin-protein ligase RFWD3 (773 aa).

Disordered stretches follow at residues 18 to 67 (VAEQ…SQVG), 92 to 117 (RVEN…IPVS), 139 to 230 (LRPP…EEVV), and 259 to 279 (GETL…SVSK). Serine 47 carries the post-translational modification Phosphoserine; by ATM and ATR. Low complexity predominate over residues 50 to 59 (APPLLQPAPA). The residue at position 64 (serine 64) is a Phosphoserine; by ATM and ATR. The span at 151-164 (RSRRRRGSASRRSR) shows a compositional bias: basic residues. Residues 186-205 (VSRTQPHLPSMSQDSETRNP) show a composition bias toward polar residues. Residues 207–221 (SEDLQVSSSSSSDSE) are compositionally biased toward low complexity. Over residues 263–273 (PKQSPQKTNPL) the composition is skewed to polar residues. Residues 287 to 331 (CTICFEHWTNAGDHRLSALRCGHLFGYKCISKWLKGQARKCPQCN) form an RING-type; degenerate zinc finger. A coiled-coil region spans residues 361–403 (SLLKEQMLRKQAELESAQCRLQLQVLTDECSKLHSRVQDLQKL). 3 WD repeats span residues 494–536 (MHGK…QTYN), 538–576 (GRPV…SHIQ), and 582–627 (KARC…SHWP).

In terms of assembly, interacts with MDM2 and p53/TP53. Binds to the RPA complex via direct interaction with RPA2. Interacts with RAD51. Post-translationally, phosphorylated at Ser-46 and Ser-63 upon DNA damage by ATM or ATR. ATM phosphorylation occurs at early times upon DNA damage, while ATR is the major kinase at later times. Phosphorylation by ATM and ATR is required to stabilize p53/TP53. Part of the phosphorylation depends upon RPA2 presence.

It localises to the nucleus. Its subcellular location is the PML body. It is found in the cytoplasm. It catalyses the reaction S-ubiquitinyl-[E2 ubiquitin-conjugating enzyme]-L-cysteine + [acceptor protein]-L-lysine = [E2 ubiquitin-conjugating enzyme]-L-cysteine + N(6)-ubiquitinyl-[acceptor protein]-L-lysine.. The protein operates within protein modification; protein ubiquitination. Its function is as follows. E3 ubiquitin-protein ligase required for the repair of DNA interstrand cross-links (ICL) in response to DNA damage. Plays a key role in RPA-mediated DNA damage signaling and repair. Acts by mediating ubiquitination of the RPA complex (RPA1, RPA2 and RPA3 subunits) and RAD51 at stalled replication forks, leading to remove them from DNA damage sites and promote homologous recombination. Also mediates the ubiquitination of p53/TP53 in the late response to DNA damage, and acts as a positive regulator of p53/TP53 stability, thereby regulating the G1/S DNA damage checkpoint. May act by catalyzing the formation of short polyubiquitin chains on p53/TP53 that are not targeted to the proteasome. In response to ionizing radiation, interacts with MDM2 and enhances p53/TP53 ubiquitination, possibly by restricting MDM2 from extending polyubiquitin chains on ubiquitinated p53/TP53. Required to translesion DNA synthesis across DNA-protein cross-link adducts by catalyzing ubiquitination of proteins on single-stranded DNA (ssDNA). This is E3 ubiquitin-protein ligase RFWD3 (RFWD3) from Ailuropoda melanoleuca (Giant panda).